We begin with the raw amino-acid sequence, 146 residues long: Deoxyuridine 5'-triphosphate nucleotidohydrolase (146 aa).

Residues 66–68 (RSG), Asn79, 83–85 (TVD), and Lys93 contribute to the substrate site.

Belongs to the dUTPase family. Requires Mg(2+) as cofactor.

The enzyme catalyses dUTP + H2O = dUMP + diphosphate + H(+). The protein operates within pyrimidine metabolism; dUMP biosynthesis; dUMP from dCTP (dUTP route): step 2/2. In terms of biological role, this enzyme is involved in nucleotide metabolism: it produces dUMP, the immediate precursor of thymidine nucleotides and it decreases the intracellular concentration of dUTP so that uracil cannot be incorporated into DNA. This chain is Deoxyuridine 5'-triphosphate nucleotidohydrolase, found in Fusobacterium nucleatum subsp. nucleatum (strain ATCC 25586 / DSM 15643 / BCRC 10681 / CIP 101130 / JCM 8532 / KCTC 2640 / LMG 13131 / VPI 4355).